Consider the following 370-residue polypeptide: Death-associated protein kinase 2 (370 aa).

The Protein kinase domain occupies 23-285; that stretch reads YDIGEELGSG…IQEALRHPWI (263 aa). ATP contacts are provided by residues 29 to 37 and K52; that span reads LGSGQFAIV. The Proton acceptor role is filled by D149. Positions 287-354 are calmodulin-binding; sequence PVDTQQAMVR…RNCESDTEEN (68 aa). The segment at 292 to 301 is autoinhibitory domain; sequence QAMVRRESVV. S299 carries the post-translational modification Phosphoserine. S318 is modified (phosphoserine; by autocatalysis). S349 carries the post-translational modification Phosphoserine. Residue T369 is modified to Phosphothreonine.

It belongs to the protein kinase superfamily. CAMK Ser/Thr protein kinase family. DAP kinase subfamily. In terms of assembly, homodimer in its autoinhibited state. Active as monomer. Interacts with 14-3-3 proteins YWHAB, YWHAE, YWHAG, YWHAH, YWHAQ, YWHAZ and SFN; the interaction requires DAPK2 phosphorylation at Thr-369 and suppresses DAPK2 kinase activity and DAPK2-induced apoptosis. Requires Mg(2+) as cofactor. In terms of processing, autophosphorylation at Ser-318 inhibits its catalytic activity. Dephosphorylated at Ser-318 in response to activated Fas and TNF-alpha receptors. As to expression, expressed in peritubular interstitial cells of the renal cortex. Isoform 1 is found in the adult brain while isoform 2 is expressed in brains of embryos and young mice (at protein level).

It localises to the cytoplasm. It is found in the cytoplasmic vesicle. The protein localises to the autophagosome lumen. The enzyme catalyses L-seryl-[protein] + ATP = O-phospho-L-seryl-[protein] + ADP + H(+). It catalyses the reaction L-threonyl-[protein] + ATP = O-phospho-L-threonyl-[protein] + ADP + H(+). Activated by Ca(2+)/calmodulin. Regulated by a double locking mechanism, involving autophosphorylation at Ser-318, calmodulin binding, and dimerization. In the inactive state, Ser-318 is phosphorylated, and the kinase is dimeric. Activation involves: dephosphorylation at Ser-318, release-of-autoinhibition mechanism where calmodulin binding induces a conformational change that relieves the steric block of the active site by the autoinhibitory domain, and generation of the monomeric active form of the kinase. Calcium/calmodulin-dependent serine/threonine kinase involved in multiple cellular signaling pathways that trigger cell survival, apoptosis, and autophagy. Capable of regulating both type I apoptotic and type II autophagic cell death signals. The former involves caspase activation, chromatin and mitochondrial condensation while the latter involves caspase-independent cell death in conjunction with accumulation of mature autophagic vesicles, plasma membrane blebs, and nuclear condensation without DNA degradation. Mediator of anoikis and a suppressor of beta-catenin-dependent anchorage-independent growth of malignant epithelial cells. May play a role in granulocytic maturation. Regulates granulocytes motility by controlling cell spreading and polarization. This chain is Death-associated protein kinase 2 (Dapk2), found in Mus musculus (Mouse).